Consider the following 664-residue polypeptide: Acetolactate synthase 2, chloroplastic (664 aa).

Positions 1-34 (MAAAAAAPSPSFSKTLSSSSSKSSTLLPRSTFPF) are enriched in low complexity. Positions 1–51 (MAAAAAAPSPSFSKTLSSSSSKSSTLLPRSTFPFPHHPHKTTPPPLHLTPT) are disordered. A chloroplast-targeting transit peptide spans 1–91 (MAAAAAAPSP…VSRFAPDEPR (91 aa)). Glutamate 138 contacts thiamine diphosphate. A disulfide bridge links cysteine 158 with cysteine 304. FAD-binding positions include arginine 240, 346–367 (HGTV…FGVR), and 389–408 (DIDS…ICAD). Residues 481 to 561 (QHQMWAAQYY…VKIMLLNNQH (81 aa)) are thiamine pyrophosphate binding. Mg(2+) contacts are provided by aspartate 532 and asparagine 559.

The protein belongs to the TPP enzyme family. Requires Mg(2+) as cofactor. It depends on thiamine diphosphate as a cofactor.

The protein resides in the plastid. It is found in the chloroplast. The enzyme catalyses 2 pyruvate + H(+) = (2S)-2-acetolactate + CO2. The protein operates within amino-acid biosynthesis; L-isoleucine biosynthesis; L-isoleucine from 2-oxobutanoate: step 1/4. It participates in amino-acid biosynthesis; L-valine biosynthesis; L-valine from pyruvate: step 1/4. The sequence is that of Acetolactate synthase 2, chloroplastic (ALS SURB) from Nicotiana tabacum (Common tobacco).